Consider the following 257-residue polypeptide: UPF0246 protein Ssed_1188 (257 aa).

The protein belongs to the UPF0246 family.

This chain is UPF0246 protein Ssed_1188, found in Shewanella sediminis (strain HAW-EB3).